Reading from the N-terminus, the 446-residue chain is SWI/SNF chromatin-remodeling accessory subunit 1 (446 aa).

The interval 1 to 53 is disordered; it reads MQTQARPPVPQGPRFNHPATPQQVRRPINAPLPGQTAQIQGNRGPQPPKKKKR. Residues 220 to 297 enclose the SWIB/MDM2 domain; the sequence is YQPMKFKLHP…PQRLHQLLQQ (78 aa).

This sequence belongs to the SMARCD family. As to quaternary structure, component of the multiprotein chromatin-remodeling complexes SWI/SNF: SWI/SNF-A (BAF), SWI/SNF-B (PBAF) and related complexes. The canonical complex contains a catalytic subunit swsn-4, core subunits swsn-1 and swsn-5, and accessory subunits swsn-3, swsn-6, phf-10, dpff-1, swsn-9 and either ham-3/swsn-2.1 or swsn-2.2. May interact with blmp-1. In terms of tissue distribution, broadly expressed in all cell types.

The protein localises to the nucleus. Its function is as follows. Involved in transcriptional activation and repression of select genes by chromatin remodeling (alteration of DNA-nucleosome topology). Component of SWI/SNF chromatin remodeling complexes that carry out key enzymatic activities, changing chromatin structure by altering DNA-histone contacts within a nucleosome in an ATP-dependent manner. Required for the blmp-1-mediated transcriptional activation or repression of several hypodermal genes such as bed-3. Involved in regulating differentiation, migration and axon pathfinding of specific serotonergic neurons (HSNs). Probably regulates vulva development through the let-60/Ras pathway. May be involved in regulation of developmental processes in the embryo driven by the Wnt pathway. Involved in gonadogenesis. This is SWI/SNF chromatin-remodeling accessory subunit 1 from Caenorhabditis elegans.